A 248-amino-acid chain; its full sequence is Small ribosomal subunit protein uS3 (248 aa).

Residues 38–106 form the KH type-2 domain; sequence IREYLEKGLD…MVALNILEVK (69 aa). Residues 214 to 248 are disordered; that stretch reads SELNAPAQGRGRGDRNGRPRRGGQRRQRAQQKQEG. Residues 231-242 are compositionally biased toward basic residues; that stretch reads RPRRGGQRRQRA.

It belongs to the universal ribosomal protein uS3 family. In terms of assembly, part of the 30S ribosomal subunit. Forms a tight complex with proteins S10 and S14.

Its function is as follows. Binds the lower part of the 30S subunit head. Binds mRNA in the 70S ribosome, positioning it for translation. The polypeptide is Small ribosomal subunit protein uS3 (Corynebacterium aurimucosum (strain ATCC 700975 / DSM 44827 / CIP 107346 / CN-1) (Corynebacterium nigricans)).